The primary structure comprises 1641 residues: Vitellogenin-1 (1641 aa).

The N-terminal stretch at 1–18 is a signal peptide; the sequence is MWYLAFLLIIGAYAADHA. A Vitellogenin domain is found at 19–790; it reads WETGNEYHYL…SQDTTVPKSS (772 aa). C172 and C211 are oxidised to a cystine. The span at 322–334 shows a compositional bias: polar residues; the sequence is LRQPSVSLNSMEA. A disordered region spans residues 322–372; the sequence is LRQPSVSLNSMEARSSENSNEENRSDDDRSNFLSNSGEEREYLQSKPTLNE. Over residues 342-351 the composition is skewed to basic and acidic residues; sequence EENRSDDDRS. N344, N549, N566, N831, N875, N898, N1001, N1053, N1268, N1393, N1396, N1505, and N1523 each carry an N-linked (GlcNAc...) asparagine glycan. The VWFD domain maps to 1410–1597; that stretch reads ESVCVLDKTH…TYAMTQESCQ (188 aa). A disulfide bridge connects residues C1435 and C1596. The disordered stretch occupies residues 1594–1641; that stretch reads ESCQGPAPENKRKAEQSTCMSRSYRPSDVISDREAGRSSTKNRGWGYH.

In terms of tissue distribution, hemolymph.

It localises to the secreted. Functionally, precursor of the egg-yolk proteins that are sources of nutrients during embryonic development. This is Vitellogenin-1 from Solenopsis invicta (Red imported fire ant).